Consider the following 637-residue polypeptide: Poly [ADP-ribose] polymerase 2 (637 aa).

A DNA-binding region spans residues 1-140 (MANKLKVDEL…KKEEKIVTAT (140 aa)). In terms of domain architecture, SAP 1 spans 2 to 36 (ANKLKVDELRLKLAERGLSTTGVKAVLVERLEEAI). Positions 35–46 (AIAEDTKKEESK) are enriched in basic and acidic residues. The disordered stretch occupies residues 35–56 (AIAEDTKKEESKSKRKRNSSND). The short motif at 41–62 (KKEESKSKRKRNSSNDTYESNK) is the Nuclear localization signal element. The region spanning 69 to 103 (FRGMIVKELREEAIKRGLDTTGTKKDLLERLCNDA) is the SAP 2 domain. A compositionally biased stretch (polar residues) spans 106–117 (VSNAPVKSSNGT). The tract at residues 106-134 (VSNAPVKSSNGTDEAEDDNNGFEEEKKEE) is disordered. Over residues 118-127 (DEAEDDNNGF) the composition is skewed to acidic residues. The region spanning 158-255 (QYHVLQRGDD…KEFIPHPKSY (98 aa)) is the WGR domain. In terms of domain architecture, PARP alpha-helical spans 286–404 (QSKLDTRVAK…EIELATKLLS (119 aa)). In terms of domain architecture, PARP catalytic spans 412 to 637 (DPLYYHYQQL…VIQVKFNYKH (226 aa)).

This sequence belongs to the ARTD/PARP family.

It localises to the nucleus. It catalyses the reaction NAD(+) + (ADP-D-ribosyl)n-acceptor = nicotinamide + (ADP-D-ribosyl)n+1-acceptor + H(+).. The catalysed reaction is L-aspartyl-[protein] + NAD(+) = 4-O-(ADP-D-ribosyl)-L-aspartyl-[protein] + nicotinamide. It carries out the reaction L-glutamyl-[protein] + NAD(+) = 5-O-(ADP-D-ribosyl)-L-glutamyl-[protein] + nicotinamide. Its function is as follows. Involved in the base excision repair (BER) pathway, by catalyzing the poly(ADP-ribosyl)ation of a limited number of acceptor proteins involved in chromatin architecture and in DNA metabolism. This modification follows DNA damages and appears as an obligatory step in a detection/signaling pathway leading to the reparation of DNA strand breaks. The chain is Poly [ADP-ribose] polymerase 2 (PARP2) from Arabidopsis thaliana (Mouse-ear cress).